The primary structure comprises 103 residues: Acylphosphatase-2 (103 aa).

Position 2 is an N-acetylserine (S2). One can recognise an Acylphosphatase-like domain in the interval 13–103; sequence SVDYEVFGRV…LDFSGFSTRY (91 aa). Active-site residues include R28 and N46.

This sequence belongs to the acylphosphatase family.

It catalyses the reaction an acyl phosphate + H2O = a carboxylate + phosphate + H(+). In terms of biological role, its physiological role is not yet clear. The sequence is that of Acylphosphatase-2 (ACYP2) from Anas platyrhynchos (Mallard).